The following is a 188-amino-acid chain: Photosystem I assembly protein Ycf4 (188 aa).

The next 2 membrane-spanning stretches (helical) occupy residues 28-48 (WATVITIGGTGFFLAGLSSYL) and 68-88 (IAIGFYGVAALLLAIYLWATI).

Belongs to the Ycf4 family.

Its subcellular location is the cellular thylakoid membrane. Seems to be required for the assembly of the photosystem I complex. The polypeptide is Photosystem I assembly protein Ycf4 (Cyanothece sp. (strain PCC 7425 / ATCC 29141)).